The chain runs to 546 residues: Probable protein kinase UbiB (546 aa).

In terms of domain architecture, Protein kinase spans 124-502 (DFSVEPLASA…HVRQGQSRYL (379 aa)). Residues 130–138 (LASASIAQV) and Lys-153 contribute to the ATP site. Asp-288 (proton acceptor) is an active-site residue. Helical transmembrane passes span 501 to 521 (YLFG…IHRP) and 522 to 542 (EWGM…LIGW).

It belongs to the ABC1 family. UbiB subfamily.

The protein resides in the cell inner membrane. Its pathway is cofactor biosynthesis; ubiquinone biosynthesis [regulation]. Is probably a protein kinase regulator of UbiI activity which is involved in aerobic coenzyme Q (ubiquinone) biosynthesis. The polypeptide is Probable protein kinase UbiB (Klebsiella pneumoniae (strain 342)).